A 368-amino-acid chain; its full sequence is Glutamate 5-kinase (368 aa).

Lysine 9 contacts ATP. Substrate-binding residues include serine 49, aspartate 136, and asparagine 148. Residues 168-169 (TD) and 210-216 (TGGMMTK) each bind ATP. The PUA domain occupies 275–353 (AGIITIDNGA…ADIENVLGYE (79 aa)).

This sequence belongs to the glutamate 5-kinase family.

The protein localises to the cytoplasm. It carries out the reaction L-glutamate + ATP = L-glutamyl 5-phosphate + ADP. Its pathway is amino-acid biosynthesis; L-proline biosynthesis; L-glutamate 5-semialdehyde from L-glutamate: step 1/2. Its function is as follows. Catalyzes the transfer of a phosphate group to glutamate to form L-glutamate 5-phosphate. In Haemophilus influenzae (strain PittEE), this protein is Glutamate 5-kinase.